An 82-amino-acid polypeptide reads, in one-letter code: Small ribosomal subunit protein uS17 (82 aa).

Belongs to the universal ribosomal protein uS17 family. Part of the 30S ribosomal subunit.

Functionally, one of the primary rRNA binding proteins, it binds specifically to the 5'-end of 16S ribosomal RNA. In Rhodopseudomonas palustris (strain HaA2), this protein is Small ribosomal subunit protein uS17.